Reading from the N-terminus, the 232-residue chain is RNA chaperone ProQ (232 aa).

The disordered stretch occupies residues 105–182 (EAKARVQAQR…REEQHTPVSD (78 aa)). A compositionally biased stretch (basic and acidic residues) spans 117 to 136 (QQAKKREAAAAAGEKEDAPR). The segment covering 137–146 (RERKPRPTTP) has biased composition (basic residues). Residues 147–177 (RRKEGAERKPRAQKPVEKAPKTVKAPREEQH) are compositionally biased toward basic and acidic residues.

This sequence belongs to the ProQ family.

The protein resides in the cytoplasm. RNA chaperone with significant RNA binding, RNA strand exchange and RNA duplexing activities. May regulate ProP activity through an RNA-based, post-transcriptional mechanism. The chain is RNA chaperone ProQ from Escherichia coli (strain ATCC 8739 / DSM 1576 / NBRC 3972 / NCIMB 8545 / WDCM 00012 / Crooks).